The chain runs to 322 residues: Undecaprenyl-phosphate 4-deoxy-4-formamido-L-arabinose transferase (322 aa).

The Cytoplasmic portion of the chain corresponds to 1–235 (MFEIHPVKKV…TCLTTTPLRM (235 aa)). A helical membrane pass occupies residues 236-256 (LSLLGSIIAIGGFSIAVLLVI). Over 257-269 (LRLTFGPQWAAEG) the chain is Periplasmic. A helical membrane pass occupies residues 270–290 (VFMLFAVLFTFIGAQFIGMGL). The Cytoplasmic segment spans residues 291-322 (LGEYIGRIYTDVRARPRYFVQQVIRPSSKENE).

The protein belongs to the glycosyltransferase 2 family.

The protein localises to the cell inner membrane. It catalyses the reaction UDP-4-deoxy-4-formamido-beta-L-arabinose + di-trans,octa-cis-undecaprenyl phosphate = 4-deoxy-4-formamido-alpha-L-arabinopyranosyl di-trans,octa-cis-undecaprenyl phosphate + UDP. It participates in glycolipid biosynthesis; 4-amino-4-deoxy-alpha-L-arabinose undecaprenyl phosphate biosynthesis; 4-amino-4-deoxy-alpha-L-arabinose undecaprenyl phosphate from UDP-4-deoxy-4-formamido-beta-L-arabinose and undecaprenyl phosphate: step 1/2. Its pathway is bacterial outer membrane biogenesis; lipopolysaccharide biosynthesis. Catalyzes the transfer of 4-deoxy-4-formamido-L-arabinose from UDP to undecaprenyl phosphate. The modified arabinose is attached to lipid A and is required for resistance to polymyxin and cationic antimicrobial peptides. The sequence is that of Undecaprenyl-phosphate 4-deoxy-4-formamido-L-arabinose transferase from Escherichia coli O7:K1 (strain IAI39 / ExPEC).